The chain runs to 298 residues: Leucine-rich repeat-containing protein 55 (298 aa).

The N-terminal stretch at 1–34 (MGDTWAQLPWPGPPHSALLLVFFLLAAGVMHSDA) is a signal peptide. In terms of domain architecture, LRRNT spans 35–65 (GASCPVLCTCRNQVVDCSNQRLFSVPPDLPM). Disulfide bonds link Cys-38-Cys-44 and Cys-42-Cys-51. 5 LRR repeats span residues 66-87 (DTRN…YLTC), 90-111 (ELRV…LFLH), 114-135 (RLAH…MFRE), 138-160 (GLVH…AFQG), and 163-186 (HLRD…EGLP). In terms of domain architecture, LRRCT spans 196 to 251 (NPWVCGCTMEPLLKWLRNRIQRCTADSQLAECRGPPEVEGAPLFSLTEESFKACHL). Cystine bridges form between Cys-200–Cys-227 and Cys-202–Cys-249. The chain crosses the membrane as a helical span at residues 259 to 279 (LFIAFVGFVVSIASVATNFLL).

In terms of assembly, interacts with KCNMA1.

The protein resides in the cell membrane. Auxiliary protein of the large-conductance, voltage and calcium-activated potassium channel (BK alpha). Modulates gating properties by producing a marked shift in the BK channel's voltage dependence of activation in the hyperpolarizing direction, and in the absence of calcium. The sequence is that of Leucine-rich repeat-containing protein 55 (Lrrc55) from Rattus norvegicus (Rat).